The chain runs to 345 residues: uncharacterized protein (345 aa).

8 helical membrane-spanning segments follow: residues 9 to 31 (VVAFSIVLSALLCSISLLQAAFV), 84 to 103 (TLVAILGTGLSAPLLLTYLL), 116 to 138 (YFSLFLCALNFEGVRLFLPILYT), 148 to 170 (VPMQIVMFFRSLALLALFASGIF), 182 to 204 (VVFVLCTVAFLISRYTTIHTIHA), 269 to 286 (WFFWTTAVLSALSYGVLG), 291 to 308 (ISHYYIAAAALPFVIAGY), and 313 to 335 (HGLTWSACIVGLFLLNTASVFFI).

It is found in the cell membrane. This is an uncharacterized protein from Treponema pallidum (strain Nichols).